The chain runs to 454 residues: Replicative DNA helicase DnaC (454 aa).

Residues 179–445 (RKGDITGIPT…NKFVNLERRF (267 aa)) enclose the SF4 helicase domain. 210–217 (ARPSVGKT) provides a ligand contact to ATP.

It belongs to the helicase family. DnaB subfamily. As to quaternary structure, the DNA replisome assembles sequentially on oriC in this order; DnaA, DnaD, DnaB, DnaI-DnaC helicase. Monomer in the absence of ATP, in its presence forms a probable homohexamer which is not active as a helicase in vitro. Interacts separately and simultaneously with helicase loaders DnaB and DnaI. Interaction with DnaB does not require ATP. Interaction with DnaI requires ATP, probably forms a DnaC(6):DnaI(6) complex, which is not active as a helicase.

The protein localises to the cytoplasm. Its subcellular location is the nucleoid. The catalysed reaction is Couples ATP hydrolysis with the unwinding of duplex DNA at the replication fork by translocating in the 5'-3' direction. This creates two antiparallel DNA single strands (ssDNA). The leading ssDNA polymer is the template for DNA polymerase III holoenzyme which synthesizes a continuous strand.. The enzyme catalyses ATP + H2O = ADP + phosphate + H(+). The main replicative DNA helicase, it participates in initiation and elongation during chromosome replication. Travels ahead of the DNA replisome, separating dsDNA into templates for DNA synthesis. The monomer has helicase activity in the presence of DnaI which is further increased by DnaB; the purified oligomeric form (probably a DnaC hexamer) does not have helicase activity in vitro, nor does the DnaC(6):DnaI(6) complex. The direction was not determined but is probably 5'-3'. Helicase activity requires an rNTP and is inactive with dNTPs. Has weak ATPase activity as a monomer, as an oligomer has ATPase activity which is stimulated by single-stranded (ss)DNA and further stimulated by DnaI and more by DnaB. In terms of biological role, deletion of a single T residue in the promoter region (a run of 8 Ts becomes 7 Ts) decreases the helicase levels by 50%, decreasing DNA replication inititation during fast growth in rich medium. Suppresses the synthetic lethality of a dnaA1-yabA deletion for growth on rich medium. This Bacillus subtilis (strain 168) protein is Replicative DNA helicase DnaC.